A 241-amino-acid polypeptide reads, in one-letter code: tRNA (guanine-N(7)-)-methyltransferase (241 aa).

Residues E71, E96, D123, and D146 each coordinate S-adenosyl-L-methionine. Residue D146 is part of the active site. Substrate is bound by residues K150, D182, and 219–222 (TKFE).

This sequence belongs to the class I-like SAM-binding methyltransferase superfamily. TrmB family.

It catalyses the reaction guanosine(46) in tRNA + S-adenosyl-L-methionine = N(7)-methylguanosine(46) in tRNA + S-adenosyl-L-homocysteine. The protein operates within tRNA modification; N(7)-methylguanine-tRNA biosynthesis. Catalyzes the formation of N(7)-methylguanine at position 46 (m7G46) in tRNA. This is tRNA (guanine-N(7)-)-methyltransferase from Pseudoalteromonas translucida (strain TAC 125).